We begin with the raw amino-acid sequence, 443 residues long: Tryptophan synthase beta chain (443 aa).

Lys110 bears the N6-(pyridoxal phosphate)lysine mark.

This sequence belongs to the TrpB family. Tetramer of two alpha and two beta chains. The cofactor is pyridoxal 5'-phosphate.

The catalysed reaction is (1S,2R)-1-C-(indol-3-yl)glycerol 3-phosphate + L-serine = D-glyceraldehyde 3-phosphate + L-tryptophan + H2O. It functions in the pathway amino-acid biosynthesis; L-tryptophan biosynthesis; L-tryptophan from chorismate: step 5/5. Functionally, the beta subunit is responsible for the synthesis of L-tryptophan from indole and L-serine. This chain is Tryptophan synthase beta chain, found in Thermococcus onnurineus (strain NA1).